Reading from the N-terminus, the 1299-residue chain is DNA-directed RNA polymerase subunit beta' (1299 aa).

Positions 60, 62, 75, and 78 each coordinate Zn(2+). 3 residues coordinate Mg(2+): Asp535, Asp537, and Asp539. Zn(2+) is bound by residues Cys877, Cys954, Cys961, and Cys964.

The protein belongs to the RNA polymerase beta' chain family. As to quaternary structure, the RNAP catalytic core consists of 2 alpha, 1 beta, 1 beta' and 1 omega subunit. When a sigma factor is associated with the core the holoenzyme is formed, which can initiate transcription. Mg(2+) is required as a cofactor. Zn(2+) serves as cofactor.

The catalysed reaction is RNA(n) + a ribonucleoside 5'-triphosphate = RNA(n+1) + diphosphate. Functionally, DNA-dependent RNA polymerase catalyzes the transcription of DNA into RNA using the four ribonucleoside triphosphates as substrates. The polypeptide is DNA-directed RNA polymerase subunit beta' (Pseudarthrobacter chlorophenolicus (strain ATCC 700700 / DSM 12829 / CIP 107037 / JCM 12360 / KCTC 9906 / NCIMB 13794 / A6) (Arthrobacter chlorophenolicus)).